A 372-amino-acid chain; its full sequence is UDP-N-acetylglucosamine--N-acetylmuramyl-(pentapeptide) pyrophosphoryl-undecaprenol N-acetylglucosamine transferase (372 aa).

Residues 16-18, Asn128, Arg164, Ser192, Ile250, and Gln295 each bind UDP-N-acetyl-alpha-D-glucosamine; that span reads TGG.

The protein belongs to the glycosyltransferase 28 family. MurG subfamily.

The protein resides in the cell inner membrane. It carries out the reaction di-trans,octa-cis-undecaprenyl diphospho-N-acetyl-alpha-D-muramoyl-L-alanyl-D-glutamyl-meso-2,6-diaminopimeloyl-D-alanyl-D-alanine + UDP-N-acetyl-alpha-D-glucosamine = di-trans,octa-cis-undecaprenyl diphospho-[N-acetyl-alpha-D-glucosaminyl-(1-&gt;4)]-N-acetyl-alpha-D-muramoyl-L-alanyl-D-glutamyl-meso-2,6-diaminopimeloyl-D-alanyl-D-alanine + UDP + H(+). The protein operates within cell wall biogenesis; peptidoglycan biosynthesis. Cell wall formation. Catalyzes the transfer of a GlcNAc subunit on undecaprenyl-pyrophosphoryl-MurNAc-pentapeptide (lipid intermediate I) to form undecaprenyl-pyrophosphoryl-MurNAc-(pentapeptide)GlcNAc (lipid intermediate II). The polypeptide is UDP-N-acetylglucosamine--N-acetylmuramyl-(pentapeptide) pyrophosphoryl-undecaprenol N-acetylglucosamine transferase (Paraburkholderia xenovorans (strain LB400)).